A 367-amino-acid polypeptide reads, in one-letter code: Phospho-N-acetylmuramoyl-pentapeptide-transferase (367 aa).

Helical transmembrane passes span 34–54, 78–98, 101–121, 135–155, 175–195, 206–226, 246–266, 270–290, 295–315, and 344–364; these read GAVV…IDHL, TPTM…VLWA, LNPY…VGFY, FGSK…CYAL, TVLH…VGAG, GLAI…AYLA, LAVL…FNAP, IFMG…IAVA, IVLA…IVQV, and QIVI…LSTL.

It belongs to the glycosyltransferase 4 family. MraY subfamily. Mg(2+) serves as cofactor.

It is found in the cell inner membrane. It carries out the reaction UDP-N-acetyl-alpha-D-muramoyl-L-alanyl-gamma-D-glutamyl-meso-2,6-diaminopimeloyl-D-alanyl-D-alanine + di-trans,octa-cis-undecaprenyl phosphate = di-trans,octa-cis-undecaprenyl diphospho-N-acetyl-alpha-D-muramoyl-L-alanyl-D-glutamyl-meso-2,6-diaminopimeloyl-D-alanyl-D-alanine + UMP. The protein operates within cell wall biogenesis; peptidoglycan biosynthesis. Its function is as follows. Catalyzes the initial step of the lipid cycle reactions in the biosynthesis of the cell wall peptidoglycan: transfers peptidoglycan precursor phospho-MurNAc-pentapeptide from UDP-MurNAc-pentapeptide onto the lipid carrier undecaprenyl phosphate, yielding undecaprenyl-pyrophosphoryl-MurNAc-pentapeptide, known as lipid I. The protein is Phospho-N-acetylmuramoyl-pentapeptide-transferase of Bradyrhizobium diazoefficiens (strain JCM 10833 / BCRC 13528 / IAM 13628 / NBRC 14792 / USDA 110).